The following is a 200-amino-acid chain: Imidazole glycerol phosphate synthase subunit HisH (200 aa).

Positions 3-200 constitute a Glutamine amidotransferase type-1 domain; it reads DVALIDAGGA…LRNFLEMSFP (198 aa). The Nucleophile role is filled by C78. Catalysis depends on residues H179 and E181.

In terms of assembly, heterodimer of HisH and HisF.

The protein resides in the cytoplasm. It carries out the reaction 5-[(5-phospho-1-deoxy-D-ribulos-1-ylimino)methylamino]-1-(5-phospho-beta-D-ribosyl)imidazole-4-carboxamide + L-glutamine = D-erythro-1-(imidazol-4-yl)glycerol 3-phosphate + 5-amino-1-(5-phospho-beta-D-ribosyl)imidazole-4-carboxamide + L-glutamate + H(+). The enzyme catalyses L-glutamine + H2O = L-glutamate + NH4(+). The protein operates within amino-acid biosynthesis; L-histidine biosynthesis; L-histidine from 5-phospho-alpha-D-ribose 1-diphosphate: step 5/9. IGPS catalyzes the conversion of PRFAR and glutamine to IGP, AICAR and glutamate. The HisH subunit catalyzes the hydrolysis of glutamine to glutamate and ammonia as part of the synthesis of IGP and AICAR. The resulting ammonia molecule is channeled to the active site of HisF. This chain is Imidazole glycerol phosphate synthase subunit HisH, found in Xanthomonas axonopodis pv. citri (strain 306).